A 389-amino-acid polypeptide reads, in one-letter code: tRNA-specific 2-thiouridylase MnmA (389 aa).

ATP contacts are provided by residues Gly-35–Ser-42 and Met-61. The interval Asn-121–Asp-123 is interaction with target base in tRNA. Cys-126 functions as the Nucleophile in the catalytic mechanism. An intrachain disulfide couples Cys-126 to Cys-223. Gly-151 contacts ATP. The tract at residues Lys-173–Gln-175 is interaction with tRNA. Cys-223 serves as the catalytic Cysteine persulfide intermediate. Residues Arg-335–Tyr-336 are interaction with tRNA.

The protein belongs to the MnmA/TRMU family.

It localises to the cytoplasm. It catalyses the reaction S-sulfanyl-L-cysteinyl-[protein] + uridine(34) in tRNA + AH2 + ATP = 2-thiouridine(34) in tRNA + L-cysteinyl-[protein] + A + AMP + diphosphate + H(+). Catalyzes the 2-thiolation of uridine at the wobble position (U34) of tRNA, leading to the formation of s(2)U34. This chain is tRNA-specific 2-thiouridylase MnmA, found in Mannheimia succiniciproducens (strain KCTC 0769BP / MBEL55E).